Reading from the N-terminus, the 246-residue chain is N-alpha-acetyltransferase 11 (246 aa).

The interaction with NAA15 stretch occupies residues 1–58; the sequence is MNIRNARPEDLMNMQHCNLLCLPENYQMKYYFYHGLSWPQLSYIAEDEDGKIVGYVLA. The N-acetyltransferase domain occupies 1–152; sequence MNIRNARPED…DAYAMKRDLA (152 aa). The tract at residues 175–246 is disordered; the sequence is EENQEAQDST…DSSEYLDSTS (72 aa). Over residues 230-246 the composition is skewed to polar residues; that stretch reads SHSTDVQDSSEYLDSTS.

Belongs to the acetyltransferase family. ARD1 subfamily. In terms of assembly, component of the N-terminal acetyltransferase A (NatA) complex composed of NAA11 and NAA15. Interacts with HIF1A.

It is found in the cytoplasm. It localises to the nucleus. It carries out the reaction N-terminal glycyl-[protein] + acetyl-CoA = N-terminal N(alpha)-acetylglycyl-[protein] + CoA + H(+). It catalyses the reaction N-terminal L-alanyl-[protein] + acetyl-CoA = N-terminal N(alpha)-acetyl-L-alanyl-[protein] + CoA + H(+). The catalysed reaction is N-terminal L-seryl-[protein] + acetyl-CoA = N-terminal N(alpha)-acetyl-L-seryl-[protein] + CoA + H(+). The enzyme catalyses N-terminal L-valyl-[protein] + acetyl-CoA = N-terminal N(alpha)-acetyl-L-valyl-[protein] + CoA + H(+). It carries out the reaction N-terminal L-cysteinyl-[protein] + acetyl-CoA = N-terminal N(alpha)-acetyl-L-cysteinyl-[protein] + CoA + H(+). It catalyses the reaction N-terminal L-threonyl-[protein] + acetyl-CoA = N-terminal N(alpha)-acetyl-L-threonyl-[protein] + CoA + H(+). Its function is as follows. Displays alpha (N-terminal) acetyltransferase activity. Proposed alternative catalytic subunit of the N-terminal acetyltransferase A (NatA) complex. The chain is N-alpha-acetyltransferase 11 (Naa11) from Rattus norvegicus (Rat).